Consider the following 257-residue polypeptide: NAD-capped RNA hydrolase NudC (257 aa).

R69 is a binding site for substrate. C98 and C101 together coordinate Zn(2+). A substrate-binding site is contributed by E111. C116 and C119 together coordinate Zn(2+). A substrate-binding site is contributed by Y124. In terms of domain architecture, Nudix hydrolase spans 125-248 (PQIAPCIIVA…TVARRLIEDT (124 aa)). Positions 158, 174, and 178 each coordinate a divalent metal cation. Positions 159–180 (GFVEVGETLEQAVAREVMEESG) match the Nudix box motif. 192 to 199 (QPWPFPQS) contacts substrate. E219 provides a ligand contact to a divalent metal cation. Residue A241 participates in substrate binding.

It belongs to the Nudix hydrolase family. NudC subfamily. Homodimer. The cofactor is Mg(2+). It depends on Mn(2+) as a cofactor. Zn(2+) is required as a cofactor.

It catalyses the reaction a 5'-end NAD(+)-phospho-ribonucleoside in mRNA + H2O = a 5'-end phospho-adenosine-phospho-ribonucleoside in mRNA + beta-nicotinamide D-ribonucleotide + 2 H(+). It carries out the reaction NAD(+) + H2O = beta-nicotinamide D-ribonucleotide + AMP + 2 H(+). The catalysed reaction is NADH + H2O = reduced beta-nicotinamide D-ribonucleotide + AMP + 2 H(+). Functionally, mRNA decapping enzyme that specifically removes the nicotinamide adenine dinucleotide (NAD) cap from a subset of mRNAs by hydrolyzing the diphosphate linkage to produce nicotinamide mononucleotide (NMN) and 5' monophosphate mRNA. The NAD-cap is present at the 5'-end of some mRNAs and stabilizes RNA against 5'-processing. Has preference for mRNAs with a 5'-end purine. Catalyzes the hydrolysis of a broad range of dinucleotide pyrophosphates. The polypeptide is NAD-capped RNA hydrolase NudC (Salmonella typhimurium (strain LT2 / SGSC1412 / ATCC 700720)).